The primary structure comprises 132 residues: MTMTDPIADFLTRLRNANSAYHDEVTLPHSKIKANIAEILKKEGYISDYRTEDARVGKSLVVQLKYGPSRERSIAGLRRVSKPGLRVYAKSTNLPRVLGGLGVAIISTSSGLRTDRQAAREGVGGEVLAYVW.

Belongs to the universal ribosomal protein uS8 family. As to quaternary structure, part of the 30S ribosomal subunit. Contacts proteins S5 and S12.

In terms of biological role, one of the primary rRNA binding proteins, it binds directly to 16S rRNA central domain where it helps coordinate assembly of the platform of the 30S subunit. The polypeptide is Small ribosomal subunit protein uS8 (Mycolicibacterium vanbaalenii (strain DSM 7251 / JCM 13017 / BCRC 16820 / KCTC 9966 / NRRL B-24157 / PYR-1) (Mycobacterium vanbaalenii)).